The primary structure comprises 60 residues: MARYRHSRSRSRSRYRRRRRRRSRYRSQRRRYRGRRRRRSRRGRRRGYSRRRYSRRRRRY.

Positions 1-60 are disordered; it reads MARYRHSRSRSRSRYRRRRRRRSRYRSQRRRYRGRRRRRSRRGRRRGYSRRRYSRRRRRY.

This sequence belongs to the protamine P1 family. Testis.

It is found in the nucleus. The protein resides in the chromosome. Functionally, protamines substitute for histones in the chromatin of sperm during the haploid phase of spermatogenesis. They compact sperm DNA into a highly condensed, stable and inactive complex. The sequence is that of Sperm protamine P1 (PRM1) from Osphranter rufus (Red kangaroo).